Reading from the N-terminus, the 127-residue chain is Small ribosomal subunit protein uS11 (127 aa).

The protein belongs to the universal ribosomal protein uS11 family. In terms of assembly, part of the 30S ribosomal subunit. Interacts with proteins S7 and S18. Binds to IF-3.

In terms of biological role, located on the platform of the 30S subunit, it bridges several disparate RNA helices of the 16S rRNA. Forms part of the Shine-Dalgarno cleft in the 70S ribosome. The sequence is that of Small ribosomal subunit protein uS11 from Flavobacterium johnsoniae (strain ATCC 17061 / DSM 2064 / JCM 8514 / BCRC 14874 / CCUG 350202 / NBRC 14942 / NCIMB 11054 / UW101) (Cytophaga johnsonae).